Here is a 66-residue protein sequence, read N- to C-terminus: Small ribosomal subunit protein bS21 (66 aa).

It belongs to the bacterial ribosomal protein bS21 family.

The sequence is that of Small ribosomal subunit protein bS21 from Persephonella marina (strain DSM 14350 / EX-H1).